A 78-amino-acid polypeptide reads, in one-letter code: NAD(P)H-quinone oxidoreductase subunit L (78 aa).

The next 2 helical transmembrane spans lie at 10–30 (IILI…PAIV) and 47–67 (VFMY…SPFL).

This sequence belongs to the complex I NdhL subunit family. In terms of assembly, NDH-1 can be composed of about 15 different subunits; different subcomplexes with different compositions have been identified which probably have different functions.

The protein resides in the cellular thylakoid membrane. The enzyme catalyses a plastoquinone + NADH + (n+1) H(+)(in) = a plastoquinol + NAD(+) + n H(+)(out). The catalysed reaction is a plastoquinone + NADPH + (n+1) H(+)(in) = a plastoquinol + NADP(+) + n H(+)(out). NDH-1 shuttles electrons from an unknown electron donor, via FMN and iron-sulfur (Fe-S) centers, to quinones in the respiratory and/or the photosynthetic chain. The immediate electron acceptor for the enzyme in this species is believed to be plastoquinone. Couples the redox reaction to proton translocation, and thus conserves the redox energy in a proton gradient. Cyanobacterial NDH-1 also plays a role in inorganic carbon-concentration. This is NAD(P)H-quinone oxidoreductase subunit L from Trichodesmium erythraeum (strain IMS101).